A 982-amino-acid chain; its full sequence is MSMAVASLRLLARGGRRRARFPAPLSVPGGRAAFLSGAAEEVAQADAPPPPPPGRKVLESFREEFEIGGRVISFETGKMARFANGSVVISMDDTHVLSTVAAAKSSEPVRDFLPLTVDYQEKQYAQGVIPTTYMRREGAPKERELLCGRIIDRPIRPLFPPGFYHEVQVMNATIIMVNVISSDGKQDPDVMAANASSAALMLSDIPWNGPIGVIRVGRIDGNFVLNPTVDELGLSDLNLVYACSRDKTLMIDVQAREITERDLQAGMKLAHAEAVKCINPQLRLAKRAGKKKKEYKISLISDKSYEKIRTLSEAPIEEVFTDSTYGKFERGEALENITQSVKAKLEEECDEDSLKFLHKAVDTVRKQVIRKRIIEKGLRVDGRQLDEVRPLYCESSTYPILHGSALFSRGDTQVLCTVTLGAPGDAQRLDSIVGPPTKRFMLHYSFPPFSINEVAKRGGLNRREVGHGTLAEKALLAVLPPEGEFPYTVRVNSEVMASDGSTSMASVCGGSMALMDAGIPVREHVAGVSVGLVSEVDQTTGDISSYRILTDILGLEDHLGDMDFKIAGTRRGITAIQLDIKPAGIPLDIICESLEPARKARNQILDRMDQEISSARAFNDGSSPRLATLSFSSDSLRKLLFHRKKIEQETGARVSVSDGTVTIVAKTQPIMDKAIEKVEFLVGREIEVGRTYKGVVSSIKEYGAFVEFNGGQQGLLHISELSHDKVSKVSDVVSVGQVLSLTCIGQDLRGNIKLSLKATLPHAHEKKDLASNHTDPLPSQEVVGWTAVENMPSKDANAEPSISKDEDNMIEETPGCSTPAVIIRSAAECDAQDVTNDPKKKRPKVAKSSPKLSKPASERQEVKRTSAKKTSGASTTAKKNKKEKADSSNDVLDAIPEQNKSNIMNYSSPSNFRSGSMKLGDVVTAKVYQIRAYGLVLELSDGVRGMHKFAENGHKDFEVGEELLVKCSSFNAKGIPVFSLLD.

The N-terminal 39 residues, 1-39 (MSMAVASLRLLARGGRRRARFPAPLSVPGGRAAFLSGAA), are a transit peptide targeting the mitochondrion. Residues 624–678 (PRLATLSFSSDSLRKLLFHRKKIEQETGARVSVSDGTVTIVAKTQPIMDKAIEKV) form the KH domain. The 69-residue stretch at 689–757 (GRTYKGVVSS…LRGNIKLSLK (69 aa)) folds into the S1 motif 1 domain. Disordered stretches follow at residues 792–814 (PSKD…EETP) and 832–892 (QDVT…NDVL). Low complexity-rich tracts occupy residues 846–855 (AKSSPKLSKP) and 868–877 (KKTSGASTTA). Residues 920 to 982 (GDVVTAKVYQ…KGIPVFSLLD (63 aa)) form the S1 motif 2 domain.

Belongs to the polyribonucleotide nucleotidyltransferase family.

The protein resides in the mitochondrion. The catalysed reaction is RNA(n+1) + phosphate = RNA(n) + a ribonucleoside 5'-diphosphate. Its function is as follows. Involved in the 3'-end maturation of mitochondrial mRNAs, rRNAs and tRNAs. Functions as a poly(A) mRNA 3'-5' degrading phosphorylase. This Oryza sativa subsp. japonica (Rice) protein is Polyribonucleotide nucleotidyltransferase 2, mitochondrial (PNP2).